The following is a 181-amino-acid chain: Peptide deformylase (181 aa).

Fe cation contacts are provided by cysteine 103 and histidine 145. The active site involves glutamate 146. Histidine 149 provides a ligand contact to Fe cation.

The protein belongs to the polypeptide deformylase family. Fe(2+) serves as cofactor.

It carries out the reaction N-terminal N-formyl-L-methionyl-[peptide] + H2O = N-terminal L-methionyl-[peptide] + formate. In terms of biological role, removes the formyl group from the N-terminal Met of newly synthesized proteins. Requires at least a dipeptide for an efficient rate of reaction. N-terminal L-methionine is a prerequisite for activity but the enzyme has broad specificity at other positions. The protein is Peptide deformylase of Orientia tsutsugamushi (strain Boryong) (Rickettsia tsutsugamushi).